Reading from the N-terminus, the 326-residue chain is Cell surface glycoprotein CD200 receptor 1 (326 aa).

The signal sequence occupies residues 1 to 25; sequence MFCFWRTSALAVLLIWGVFVAGSSC. Residues 26–238 are Extracellular-facing; the sequence is TDKNQTTQNN…SRGGNQSLRP (213 aa). 11 N-linked (GlcNAc...) asparagine glycosylation sites follow: asparagine 29, asparagine 34, asparagine 35, asparagine 44, asparagine 93, asparagine 101, asparagine 159, asparagine 192, asparagine 207, asparagine 221, and asparagine 233. Residues 51-136 form the Ig-like V-type domain; sequence IGTKALLCCF…YTCETVTPEG (86 aa). 2 disulfides stabilise this stretch: cysteine 58–cysteine 129 and cysteine 82–cysteine 97. Positions 138-229 constitute an Ig-like C2-type domain; the sequence is FEKNYDLQVL…GNQSLSIELS (92 aa). Disulfide bonds link cysteine 164–cysteine 213 and cysteine 183–cysteine 201. Residues 239-259 traverse the membrane as a helical segment; that stretch reads YIPYIIPSIIILIIIGCICLL. Residues 260–326 lie on the Cytoplasmic side of the membrane; sequence KISGFRKCKL…DCLTLSAIGI (67 aa).

It belongs to the CD200R family. CD200 and CD200R1 interact via their respective N-terminal Ig-like domains. Expressed in granulocytes, monocytes, most T-cells and a subset of NK, NKT and B-cells (at protein level). Expressed in the spleen, lung, liver, testis, bone marrow, lymph nodes, spinal cord, kidney, uterus and small intestine. Expressed in mast and dendritic cells. Expressed in the lung of N.brasiliensis-infected mice.

It localises to the cell membrane. Its function is as follows. Inhibitory receptor for the CD200/OX2 cell surface glycoprotein. Limits inflammation by inhibiting the expression of pro-inflammatory molecules including TNF-alpha, interferons, and inducible nitric oxide synthase (iNOS) in response to selected stimuli. The polypeptide is Cell surface glycoprotein CD200 receptor 1 (Cd200r1) (Mus musculus (Mouse)).